The chain runs to 309 residues: HPr kinase/phosphorylase (309 aa).

Residues H138 and K159 contribute to the active site. 153-160 (GDSGIGKS) serves as a coordination point for ATP. Mg(2+) is bound at residue S160. D177 (proton acceptor; for phosphorylation activity. Proton donor; for dephosphorylation activity) is an active-site residue. The segment at 201-210 (LEIRGVGIID) is important for the catalytic mechanism of both phosphorylation and dephosphorylation. E202 contributes to the Mg(2+) binding site. R243 is a catalytic residue. Residues 264–269 (PVKTGR) are important for the catalytic mechanism of dephosphorylation.

This sequence belongs to the HPrK/P family. As to quaternary structure, homohexamer. It depends on Mg(2+) as a cofactor.

It carries out the reaction [HPr protein]-L-serine + ATP = [HPr protein]-O-phospho-L-serine + ADP + H(+). The catalysed reaction is [HPr protein]-O-phospho-L-serine + phosphate + H(+) = [HPr protein]-L-serine + diphosphate. With respect to regulation, kinase activity is slightly activated by fructose 1,6-bisphosphate (FBP) at low ATP concentrations, and is inhibited by inorganic phosphate (Pi). Moreover, FBP, phosphoenolpyruvate and 2-phosphoglycerate, but not fructose 1-P, fructose 6-P, and ribulose 1,5-bisphosphate protect kinase activity against inhibition by Pi. Dephosphorylation of P-Ser-HPr by S.salivarius HPrK/P is strictly dependent on the presence of Pi, and is inhibited by FBP. FBP seems to modulate HPrK/P activities by enhancing affinity of the active site for ATP and, conversely, lowering the affinity for Pi. Its function is as follows. Catalyzes the ATP- as well as probably the pyrophosphate-dependent phosphorylation of 'Ser-46' in HPr, a phosphocarrier protein of the phosphoenolpyruvate-dependent sugar phosphotransferase system (PTS). HprK/P also catalyzes the pyrophosphate-producing, inorganic phosphate-dependent dephosphorylation (phosphorolysis) of seryl-phosphorylated HPr (P-Ser-HPr). The two antagonistic activities of HprK/P are regulated by several intracellular metabolites, which change their concentration in response to the absence or presence of rapidly metabolisable carbon sources (glucose, fructose, etc.) in the growth medium. Therefore, by controlling the phosphorylation state of HPr, the bifunctional HPr kinase/phosphorylase is a sensor enzyme that plays a major role in the regulation of carbon metabolism and sugar transport: it probably mediates carbon catabolite repression (CCR), and regulates PTS-catalyzed carbohydrate uptake and inducer exclusion. The protein is HPr kinase/phosphorylase (hprK) of Streptococcus salivarius.